A 523-amino-acid polypeptide reads, in one-letter code: Glutamate--cysteine ligase, chloroplastic (523 aa).

C187 and C407 are joined by a disulfide.

Belongs to the carboxylate-amine ligase family. Glutamate--cysteine ligase type 2 subfamily. As to quaternary structure, homodimer or monomer when oxidized or reduced, respectively. Post-translationally, the Cys-187-Cys-407 disulfide bridge is known to modulate the enzyme activity according to the redox status. The oxidized form constitutes the active enzyme.

It is found in the plastid. The protein resides in the chloroplast. It carries out the reaction L-cysteine + L-glutamate + ATP = gamma-L-glutamyl-L-cysteine + ADP + phosphate + H(+). It participates in sulfur metabolism; glutathione biosynthesis; glutathione from L-cysteine and L-glutamate: step 1/2. This Solanum lycopersicum (Tomato) protein is Glutamate--cysteine ligase, chloroplastic (GSH1).